The primary structure comprises 484 residues: MRHSKRTYCPDWDDKDWDYGKWRSSSSHKRRKRSHSSAQENKRCKYNHSKMCDSHYLESRSINEKDYHSRRYIDEYRNDYTQGCEPGHRQRDHESRYQNHSSKSSGRSGRSSYKSKHRIHHSTSHRRSHGKSHRRKRTRSVEDDEEGHLICQSGDVLSARYEIVDTLGEGAFGKVVECIDHKAGGRHVAVKIVKNVDRYCEAARSEIQVLEHLNTTDPNSTFRCVQMLEWFEHHGHICIVFELLGLSTYDFIKENGFLPFRLDHIRKMAYQICKSVNFLHSNKLTHTDLKPENILFVQSDYTEAYNPKIKRDERTLINPDIKVVDFGSATYDDEHHSTLVSTRHYRAPEVILALGWSQPCDVWSIGCILIEYYLGFTVFPTHDSKEHLAMMERILGPLPKHMIQKTRKRKYFHHDRLDWDEHSSAGRYVSRRCKPLKEFMLSQDVEHERLFDLIQKMLEYDPAKRITLREALKHPFFDLLKKSI.

A disordered region spans residues 1–42 (MRHSKRTYCPDWDDKDWDYGKWRSSSSHKRRKRSHSSAQENK). Residues 26 to 35 (SSHKRRKRSH) are compositionally biased toward basic residues. At Ser61 the chain carries Phosphoserine. Residues 79–146 (DYTQGCEPGH…RTRSVEDDEE (68 aa)) are disordered. Over residues 86–97 (PGHRQRDHESRY) the composition is skewed to basic and acidic residues. The span at 100–112 (HSSKSSGRSGRSS) shows a compositional bias: low complexity. Positions 113–138 (YKSKHRIHHSTSHRRSHGKSHRRKRT) are enriched in basic residues. A Phosphothreonine modification is found at Thr138. Ser140 carries the post-translational modification Phosphoserine. Positions 161-477 (YEIVDTLGEG…LREALKHPFF (317 aa)) constitute a Protein kinase domain. Residues 167–175 (LGEGAFGKV) and Lys191 contribute to the ATP site. Asp288 serves as the catalytic Proton acceptor.

It belongs to the protein kinase superfamily. CMGC Ser/Thr protein kinase family. Lammer subfamily. Interacts with PPIG and UBL5. Post-translationally, autophosphorylates on all three types of residues. Endothelial cells.

It localises to the nucleus. The enzyme catalyses L-seryl-[protein] + ATP = O-phospho-L-seryl-[protein] + ADP + H(+). It catalyses the reaction L-threonyl-[protein] + ATP = O-phospho-L-threonyl-[protein] + ADP + H(+). It carries out the reaction L-tyrosyl-[protein] + ATP = O-phospho-L-tyrosyl-[protein] + ADP + H(+). With respect to regulation, regulates splicing of its own pre-mRNA according to its kinase activity; increased expression of the catalytically active form influences splicing to generate the catalytically inactive splicing variant lacking the kinase domain. Leucettine L41 inhibits its kinase activity and affects the regulation of alternative splicing mediated by phosphorylation of SR proteins. In terms of biological role, dual specificity kinase acting on both serine/threonine and tyrosine-containing substrates. Phosphorylates serine- and arginine-rich (SR) proteins of the spliceosomal complex and may be a constituent of a network of regulatory mechanisms that enable SR proteins to control RNA splicing. Phosphorylates: SRSF1, SRSF3 and PTPN1. Regulates the alternative splicing of tissue factor (F3) pre-mRNA in endothelial cells. This Homo sapiens (Human) protein is Dual specificity protein kinase CLK1.